We begin with the raw amino-acid sequence, 164 residues long: 3-isopropylmalate dehydratase small subunit (164 aa).

Belongs to the LeuD family. LeuD type 2 subfamily. In terms of assembly, heterodimer of LeuC and LeuD.

It carries out the reaction (2R,3S)-3-isopropylmalate = (2S)-2-isopropylmalate. It functions in the pathway amino-acid biosynthesis; L-leucine biosynthesis; L-leucine from 3-methyl-2-oxobutanoate: step 2/4. Its function is as follows. Catalyzes the isomerization between 2-isopropylmalate and 3-isopropylmalate, via the formation of 2-isopropylmaleate. This Lachnospira eligens (strain ATCC 27750 / DSM 3376 / VPI C15-48 / C15-B4) (Eubacterium eligens) protein is 3-isopropylmalate dehydratase small subunit.